The primary structure comprises 258 residues: Probable splicing factor, arginine/serine-rich 3 (258 aa).

Positions 9–83 constitute an RRM 1 domain; sequence QKVYVGNLPG…RRIRVEFTRG (75 aa). Disordered stretches follow at residues 81 to 120 and 190 to 258; these read TRGV…PQRR and AYIR…PSPQ. Residues 97–107 are compositionally biased toward basic and acidic residues; sequence GGDHRGGDFRG. Residues 108–117 are compositionally biased toward gly residues; that stretch reads GRGGGRGGGP. The RRM 2 domain maps to 123 to 197; it reads YRVIVEGLPP…ETAYIRVRED (75 aa). The span at 208 to 223 shows a compositional bias: basic and acidic residues; sequence GRDRSRSRSPRAERRA. A compositionally biased stretch (basic residues) spans 228–246; sequence SPRRSRSRSRSRSRSRSRS. Over residues 247–258 the composition is skewed to low complexity; it reads ASRSPSRSPSPQ.

The protein belongs to the splicing factor SR family. In terms of assembly, interacts with spk-1. Post-translationally, directly phosphorylated by spk-1 in vitro on serine residues of the RS domain. Predominantly coexpressed with spk-1 in adult hermaphrodite germlines.

It is found in the nucleus. Its function is as follows. Plays an essential role in embryogenesis. The chain is Probable splicing factor, arginine/serine-rich 3 (rsp-3) from Caenorhabditis elegans.